The primary structure comprises 76 residues: Conotoxin Cal5a L2 (76 aa).

Positions 1 to 22 are cleaved as a signal peptide; it reads MRFYIGLMAALMLTSILRTDSA. The propeptide occupies 23 to 42; that stretch reads SVGQTGTKSELALIERVIRQ. Pro-50 is subject to 4-hydroxyproline. Residues Pro-58, Pro-62, and Pro-64 each carry the 4-hydroxyproline; partial modification.

Belongs to the conotoxin T superfamily. Contains 2 disulfide bonds that can be either 'C1-C3, C2-C4' or 'C1-C4, C2-C3', since these disulfide connectivities have been observed for conotoxins with cysteine framework V (for examples, see AC P0DQQ7 and AC P81755). Expressed by the venom duct.

The protein resides in the secreted. Functionally, probable neurotoxin with unknown target. Possibly targets ion channels. In Californiconus californicus (California cone), this protein is Conotoxin Cal5a L2.